Here is a 357-residue protein sequence, read N- to C-terminus: Geranylgeranyl pyrophosphate synthase 11, chloroplastic (357 aa).

The N-terminal 37 residues, 1 to 37, are a transit peptide targeting the chloroplast; the sequence is MATTLSSSSLFIQFRGRRYNSLSSFNNLQKRTVLSLS. The isopentenyl diphosphate site is built by Lys103, Arg106, and His135. The Mg(2+) site is built by Asp142 and Asp148. Residue Arg153 coordinates dimethylallyl diphosphate. Arg154 serves as a coordination point for isopentenyl diphosphate. Dimethylallyl diphosphate contacts are provided by Lys242, Thr243, Gln280, Lys297, and Lys307.

The protein belongs to the FPP/GGPP synthase family. In terms of assembly, monomer. It depends on Mg(2+) as a cofactor.

It is found in the plastid. The protein localises to the chloroplast. It catalyses the reaction isopentenyl diphosphate + dimethylallyl diphosphate = (2E)-geranyl diphosphate + diphosphate. The catalysed reaction is isopentenyl diphosphate + (2E)-geranyl diphosphate = (2E,6E)-farnesyl diphosphate + diphosphate. The enzyme catalyses isopentenyl diphosphate + (2E,6E)-farnesyl diphosphate = (2E,6E,10E)-geranylgeranyl diphosphate + diphosphate. It participates in isoprenoid biosynthesis; farnesyl diphosphate biosynthesis; farnesyl diphosphate from geranyl diphosphate and isopentenyl diphosphate: step 1/1. It functions in the pathway isoprenoid biosynthesis; geranyl diphosphate biosynthesis; geranyl diphosphate from dimethylallyl diphosphate and isopentenyl diphosphate: step 1/1. Its pathway is isoprenoid biosynthesis; geranylgeranyl diphosphate biosynthesis; geranylgeranyl diphosphate from farnesyl diphosphate and isopentenyl diphosphate: step 1/1. Functionally, catalyzes the trans-addition of the three molecules of IPP onto DMAPP to form geranylgeranyl pyrophosphate. The chain is Geranylgeranyl pyrophosphate synthase 11, chloroplastic from Arabidopsis thaliana (Mouse-ear cress).